Reading from the N-terminus, the 63-residue chain is Large ribosomal subunit protein uL29 (63 aa).

The protein belongs to the universal ribosomal protein uL29 family.

The protein is Large ribosomal subunit protein uL29 of Proteus mirabilis (strain HI4320).